The primary structure comprises 72 residues: Gene 35 protein (72 aa).

This chain is Gene 35 protein (35), found in Mycobacterium phage L5 (Mycobacteriophage L5).